The primary structure comprises 147 residues: Large ribosomal subunit protein uL13 (147 aa).

The protein belongs to the universal ribosomal protein uL13 family. As to quaternary structure, part of the 50S ribosomal subunit.

This protein is one of the early assembly proteins of the 50S ribosomal subunit, although it is not seen to bind rRNA by itself. It is important during the early stages of 50S assembly. In Frankia casuarinae (strain DSM 45818 / CECT 9043 / HFP020203 / CcI3), this protein is Large ribosomal subunit protein uL13.